Here is a 62-residue protein sequence, read N- to C-terminus: 6.7 kDa chloroplast outer envelope membrane protein (62 aa).

Residues 1 to 17 (MESVAKPATTKEGSAKQ) are Chloroplast intermembrane-facing. The helical transmembrane segment at 18–40 (AAIVVGVLALGWFAIQVAFIPLF) threads the bilayer. Topologically, residues 41–62 (NKVRGGGSDKKDDDVNAFTPDT) are cytoplasmic.

It localises to the plastid. The protein resides in the chloroplast outer membrane. This chain is 6.7 kDa chloroplast outer envelope membrane protein, found in Spinacia oleracea (Spinach).